Here is a 260-residue protein sequence, read N- to C-terminus: Snake venom serine protease homolog 2 (260 aa).

Positions 1-18 (MVLIRVLANLLVLQLSYA) are cleaved as a signal peptide. A propeptide spanning residues 19–24 (QKSSEL) is cleaved from the precursor. The 227-residue stretch at 25-251 (VIGGDECNIN…YTDWIQSIIA (227 aa)) folds into the Peptidase S1 domain. 6 disulfides stabilise this stretch: cysteine 31–cysteine 165, cysteine 52–cysteine 68, cysteine 100–cysteine 258, cysteine 144–cysteine 212, cysteine 176–cysteine 191, and cysteine 202–cysteine 227. An N-linked (GlcNAc...) asparagine glycan is attached at asparagine 123. The N-linked (GlcNAc...) asparagine glycan is linked to asparagine 253.

Belongs to the peptidase S1 family. Snake venom subfamily. In terms of tissue distribution, expressed by the venom gland.

Its subcellular location is the secreted. Snake venom serine protease homolog that may act in the hemostasis system of the prey. The protein is Snake venom serine protease homolog 2 of Macrovipera lebetinus (Levantine viper).